Consider the following 32-residue polypeptide: Cytochrome b6-f complex subunit 7 (32 aa).

The chain crosses the membrane as a helical span at residues 9 to 27 (AAVFWVLIPVGLAGGALLL).

Belongs to the PetM family. As to quaternary structure, the 4 large subunits of the cytochrome b6-f complex are cytochrome b6, subunit IV (17 kDa polypeptide, PetD), cytochrome f and the Rieske protein, while the 4 small subunits are PetG, PetL, PetM and PetN. The complex functions as a dimer.

It is found in the cellular thylakoid membrane. Component of the cytochrome b6-f complex, which mediates electron transfer between photosystem II (PSII) and photosystem I (PSI), cyclic electron flow around PSI, and state transitions. This is Cytochrome b6-f complex subunit 7 from Prochlorococcus marinus (strain MIT 9303).